We begin with the raw amino-acid sequence, 138 residues long: Nucleoside diphosphate kinase (138 aa).

The ATP site is built by Lys9, Phe57, Arg85, Thr91, Arg102, and Asn112. His115 serves as the catalytic Pros-phosphohistidine intermediate.

It belongs to the NDK family. Homotetramer. Mg(2+) serves as cofactor.

Its subcellular location is the cytoplasm. The catalysed reaction is a 2'-deoxyribonucleoside 5'-diphosphate + ATP = a 2'-deoxyribonucleoside 5'-triphosphate + ADP. It catalyses the reaction a ribonucleoside 5'-diphosphate + ATP = a ribonucleoside 5'-triphosphate + ADP. Its function is as follows. Major role in the synthesis of nucleoside triphosphates other than ATP. The ATP gamma phosphate is transferred to the NDP beta phosphate via a ping-pong mechanism, using a phosphorylated active-site intermediate. This chain is Nucleoside diphosphate kinase, found in Deinococcus deserti (strain DSM 17065 / CIP 109153 / LMG 22923 / VCD115).